Reading from the N-terminus, the 204-residue chain is Auxin-binding protein 4 (204 aa).

The N-terminal stretch at 1-41 (MVRRRPATGAAPRPHLAAVGRGLLLASVLAAAASSLPVAES) is a signal peptide. Cys43 and Cys196 are joined by a disulfide. Zn(2+)-binding residues include His98, His100, and Glu104. An N-linked (GlcNAc...) asparagine glycan is attached at Asn136. Residue His147 participates in Zn(2+) binding. The short motif at 201–204 (KDEL) is the Prevents secretion from ER element.

In terms of assembly, homodimer.

The protein resides in the endoplasmic reticulum lumen. Functionally, this is probably a receptor for the plant hormone auxin. The chain is Auxin-binding protein 4 (ABP4) from Zea mays (Maize).